A 394-amino-acid chain; its full sequence is Mitogen-activated protein kinase homolog D5 (394 aa).

The Protein kinase domain occupies 62-347 (RPPIMPIGKG…VENALAHPYL (286 aa)). ATP-binding positions include 68–76 (IGKGAYGIV) and K91. The Proton acceptor role is filled by D188. Phosphothreonine is present on T220. Residues 220-222 (TEY) carry the TXY motif. A Phosphotyrosine modification is found at Y222.

The protein belongs to the protein kinase superfamily. CMGC Ser/Thr protein kinase family. MAP kinase subfamily. Mg(2+) serves as cofactor. Post-translationally, dually phosphorylated on Thr-220 and Tyr-222, which activates the enzyme. In terms of tissue distribution, leaves, roots, root apices, and dormant and growing axillary buds.

It carries out the reaction L-seryl-[protein] + ATP = O-phospho-L-seryl-[protein] + ADP + H(+). The catalysed reaction is L-threonyl-[protein] + ATP = O-phospho-L-threonyl-[protein] + ADP + H(+). Its activity is regulated as follows. Activated by tyrosine and threonine phosphorylation. This is Mitogen-activated protein kinase homolog D5 from Pisum sativum (Garden pea).